A 622-amino-acid polypeptide reads, in one-letter code: Apical membrane antigen 1 (622 aa).

The N-terminal stretch at 1-24 (MRKLYCVLLLSAFEFTYMINFGRG) is a signal peptide. Topologically, residues 25-546 (QNYWEHPYQK…EHKPTYDKMK (522 aa)) are extracellular. Intrachain disulfides connect C149-C302, C217-C247, C263-C275, C320-C418, and C337-C409. N-linked (GlcNAc...) asparagine glycosylation is present at N162. N286, N371, N421, N422, and N499 each carry an N-linked (GlcNAc...) asparagine glycan. Intrachain disulfides connect C443–C502, C490–C507, and C492–C509. A helical transmembrane segment spans residues 547–567 (IIIASSAAVAVLATILMVYLY). The Cytoplasmic portion of the chain corresponds to 568–622 (KRKGNAEKYDKMDEPQHYGKSNSRNDEMLDPEASFWGEEKRASHTTPVLMEKPYY). The span at 578 to 594 (KMDEPQHYGKSNSRNDE) shows a compositional bias: basic and acidic residues. Positions 578–607 (KMDEPQHYGKSNSRNDEMLDPEASFWGEEK) are disordered.

The protein belongs to the apicomplexan parasites AMA1 family.

It localises to the membrane. Functionally, involved in parasite invasion of erythrocytes. This is Apical membrane antigen 1 (AMA-1) from Plasmodium falciparum (isolate FC27 / Papua New Guinea).